Reading from the N-terminus, the 279-residue chain is Putative pyruvate, phosphate dikinase regulatory protein (279 aa).

An ADP-binding site is contributed by 153 to 160 (GVSRTSKT).

It belongs to the pyruvate, phosphate/water dikinase regulatory protein family. PDRP subfamily.

The enzyme catalyses N(tele)-phospho-L-histidyl/L-threonyl-[pyruvate, phosphate dikinase] + ADP = N(tele)-phospho-L-histidyl/O-phospho-L-threonyl-[pyruvate, phosphate dikinase] + AMP + H(+). It catalyses the reaction N(tele)-phospho-L-histidyl/O-phospho-L-threonyl-[pyruvate, phosphate dikinase] + phosphate + H(+) = N(tele)-phospho-L-histidyl/L-threonyl-[pyruvate, phosphate dikinase] + diphosphate. Its function is as follows. Bifunctional serine/threonine kinase and phosphorylase involved in the regulation of the pyruvate, phosphate dikinase (PPDK) by catalyzing its phosphorylation/dephosphorylation. The protein is Putative pyruvate, phosphate dikinase regulatory protein of Rhodopseudomonas palustris (strain BisA53).